The primary structure comprises 30 residues: Dermonecrotic toxin LlSicTox-alphaIII-1 (30 aa).

Residue H12 is part of the active site.

Belongs to the arthropod phospholipase D family. Class I subfamily. Mg(2+) is required as a cofactor. Contains 1 disulfide bond. As to expression, expressed by the venom gland.

It localises to the secreted. It catalyses the reaction an N-(acyl)-sphingosylphosphocholine = an N-(acyl)-sphingosyl-1,3-cyclic phosphate + choline. The enzyme catalyses an N-(acyl)-sphingosylphosphoethanolamine = an N-(acyl)-sphingosyl-1,3-cyclic phosphate + ethanolamine. The catalysed reaction is a 1-acyl-sn-glycero-3-phosphocholine = a 1-acyl-sn-glycero-2,3-cyclic phosphate + choline. It carries out the reaction a 1-acyl-sn-glycero-3-phosphoethanolamine = a 1-acyl-sn-glycero-2,3-cyclic phosphate + ethanolamine. In terms of biological role, dermonecrotic toxins cleave the phosphodiester linkage between the phosphate and headgroup of certain phospholipids (sphingolipid and lysolipid substrates), forming an alcohol (often choline) and a cyclic phosphate. This toxin acts on sphingomyelin (SM). It may also act on ceramide phosphoethanolamine (CPE), lysophosphatidylcholine (LPC) and lysophosphatidylethanolamine (LPE), but not on lysophosphatidylserine (LPS), and lysophosphatidylglycerol (LPG). It acts by transphosphatidylation, releasing exclusively cyclic phosphate products as second products. In vivo, intradermal injection induces dermonecrosis. Induces hemolysis, increased vascular permeability, edema, inflammatory response, and platelet aggregation. The protein is Dermonecrotic toxin LlSicTox-alphaIII-1 of Loxosceles laeta (South American recluse spider).